Reading from the N-terminus, the 452-residue chain is RNA polymerase II-associated protein rba50 (452 aa).

Disordered stretches follow at residues 60-83 (LRKN…IDEE), 125-202 (EREL…QTKR), and 223-261 (PIKG…PLEF). Positions 125–135 (ERELAQRKDRS) are enriched in basic and acidic residues. The span at 136–154 (SQVNTPDLSQRPSDDSFLS) shows a compositional bias: polar residues. The segment covering 156-165 (EKLRSSEKLN) has biased composition (basic and acidic residues). The span at 170 to 191 (SVLSSEAVDSSSGSPSPPMALS) shows a compositional bias: low complexity.

The protein belongs to the RPAP1 family. Interacts with RNA polymerase II.

Its subcellular location is the cytoplasm. The protein resides in the nucleus. Functionally, forms an interface between the RNA polymerase II enzyme and chaperone/scaffolding proteins, suggesting that it is required to connect RNA polymerase II to regulators of protein complex formation. The polypeptide is RNA polymerase II-associated protein rba50 (rba50) (Schizosaccharomyces pombe (strain 972 / ATCC 24843) (Fission yeast)).